The primary structure comprises 499 residues: Putative DUF21 domain-containing protein At1g03270 (499 aa).

At 1 to 32 the chain is on the extracellular side; that stretch reads MVVLSTLALVRAAYSLNSFVFEAEDIRFGSPW. A CNNM transmembrane domain is found at 29–211; sequence GSPWWFVVVG…GKGGELTHEE (183 aa). The chain crosses the membrane as a helical span at residues 33–53; that stretch reads WFVVVGVACFLVLFAGIMSGL. The Cytoplasmic portion of the chain corresponds to 54 to 91; sequence TLGLMSLGLVELEILQQSGSSAEKKQAAAILPVVKKQH. The chain crosses the membrane as a helical span at residues 92-112; the sequence is QLLVTLLLCNAAAMEALPICL. Topologically, residues 113–114 are extracellular; the sequence is DK. A helical transmembrane segment spans residues 115-135; the sequence is IFHPFVAVLLSVTFVLAFGEI. Residues 136–145 lie on the Cytoplasmic side of the membrane; that stretch reads IPQAICSRYG. A helical transmembrane segment spans residues 146–166; the sequence is LAVGANFLWLVRILMIICYPI. Residues 167–499 are Extracellular-facing; it reads AYPIGKVLDA…TEPLLAESDR (333 aa). N-linked (GlcNAc...) asparagine glycosylation is present at asparagine 181. CBS domains follow at residues 230-291, 295-359, and 365-431; these read MTPI…EAPV, SIRK…SNLT, and HESH…IVDE. N-linked (GlcNAc...) asparagine glycans are attached at residues asparagine 357, asparagine 391, and asparagine 484.

The protein localises to the membrane. The chain is Putative DUF21 domain-containing protein At1g03270 (CBSDUF4) from Arabidopsis thaliana (Mouse-ear cress).